We begin with the raw amino-acid sequence, 89 residues long: Co-chaperonin GroES (89 aa).

It belongs to the GroES chaperonin family. Heptamer of 7 subunits arranged in a ring. Interacts with the chaperonin GroEL.

It localises to the cytoplasm. In terms of biological role, together with the chaperonin GroEL, plays an essential role in assisting protein folding. The GroEL-GroES system forms a nano-cage that allows encapsulation of the non-native substrate proteins and provides a physical environment optimized to promote and accelerate protein folding. GroES binds to the apical surface of the GroEL ring, thereby capping the opening of the GroEL channel. In Pseudothermotoga lettingae (strain ATCC BAA-301 / DSM 14385 / NBRC 107922 / TMO) (Thermotoga lettingae), this protein is Co-chaperonin GroES.